Reading from the N-terminus, the 448-residue chain is UDP-N-acetylmuramoylalanine--D-glutamate ligase (448 aa).

An ATP-binding site is contributed by 116–122 (GSNAKST).

Belongs to the MurCDEF family.

The protein resides in the cytoplasm. The enzyme catalyses UDP-N-acetyl-alpha-D-muramoyl-L-alanine + D-glutamate + ATP = UDP-N-acetyl-alpha-D-muramoyl-L-alanyl-D-glutamate + ADP + phosphate + H(+). It participates in cell wall biogenesis; peptidoglycan biosynthesis. Cell wall formation. Catalyzes the addition of glutamate to the nucleotide precursor UDP-N-acetylmuramoyl-L-alanine (UMA). This is UDP-N-acetylmuramoylalanine--D-glutamate ligase from Pseudomonas fluorescens (strain ATCC BAA-477 / NRRL B-23932 / Pf-5).